Here is a 146-residue protein sequence, read N- to C-terminus: Transcriptional regulator MraZ (146 aa).

SpoVT-AbrB domains lie at 5-47 and 76-119; these read EYYH…TITD and SIQV…AKEK.

The protein belongs to the MraZ family. As to quaternary structure, forms oligomers.

It localises to the cytoplasm. It is found in the nucleoid. The sequence is that of Transcriptional regulator MraZ from Dictyoglomus thermophilum (strain ATCC 35947 / DSM 3960 / H-6-12).